The chain runs to 317 residues: Transaldolase (317 aa).

K126 acts as the Schiff-base intermediate with substrate in catalysis.

Belongs to the transaldolase family. Type 1 subfamily. As to quaternary structure, homodimer.

It is found in the cytoplasm. It catalyses the reaction D-sedoheptulose 7-phosphate + D-glyceraldehyde 3-phosphate = D-erythrose 4-phosphate + beta-D-fructose 6-phosphate. The protein operates within carbohydrate degradation; pentose phosphate pathway; D-glyceraldehyde 3-phosphate and beta-D-fructose 6-phosphate from D-ribose 5-phosphate and D-xylulose 5-phosphate (non-oxidative stage): step 2/3. Transaldolase is important for the balance of metabolites in the pentose-phosphate pathway. This chain is Transaldolase, found in Burkholderia mallei (strain SAVP1).